The primary structure comprises 520 residues: Vacuolar protein sorting-associated protein 9A (520 aa).

The VPS9 domain occupies 102–246 (VIADEKLFQK…ISNIDAKSIS (145 aa)). The GTP site is built by N180 and D185. Disordered stretches follow at residues 267–331 (DSQT…AESI), 396–433 (LAPS…ETDR), and 464–520 (LVEG…EASE). Polar residues predominate over residues 287-323 (LQKTQSLNPKRENTLFQSKSSDSLSGTNELLNINSET). S330 bears the Phosphoserine mark. A compositionally biased stretch (low complexity) spans 396–407 (LAPSSSPLQASS). Basic and acidic residues-rich tracts occupy residues 413–433 (KESE…ETDR) and 464–497 (LVEG…REGD).

In terms of assembly, homodimer. The homodimer interacts with RABF2B. Interacts with RABF1 and RABF2A. Widely expressed.

Functionally, functions as a guanine nucleotide exchange factor (GEF) for Rab small GTPases. Activates specifically RABF1, RABF2A and RABF2B proteins. Required for early stages of embryogenesis, cytokinesis, embryogenesis, and organ development. Is essential for the establishment or maintenance of the polar localization of the auxin efflux carrier PIN1. This Arabidopsis thaliana (Mouse-ear cress) protein is Vacuolar protein sorting-associated protein 9A.